The sequence spans 310 residues: Transcription initiation factor IIB (310 aa).

The TFIIB-type zinc-finger motif lies at 9-41 (EKETKCPECGSDDLRGDYERAEIVCGKCGLVID). Residues cysteine 14, cysteine 17, cysteine 33, and cysteine 36 each coordinate Zn(2+). 2 repeat units span residues 127–210 (SELD…TREL) and 221–302 (DYVP…ELTE).

Belongs to the TFIIB family.

Functionally, stabilizes TBP binding to an archaeal box-A promoter. Also responsible for recruiting RNA polymerase II to the pre-initiation complex (DNA-TBP-TFIIB). This is Transcription initiation factor IIB from Methanothermobacter thermautotrophicus (strain ATCC 29096 / DSM 1053 / JCM 10044 / NBRC 100330 / Delta H) (Methanobacterium thermoautotrophicum).